The sequence spans 642 residues: Threonine--tRNA ligase (642 aa).

Residues 1 to 63 (MNDITVTLPD…YNDARVVIVT (63 aa)) form the TGS domain. Positions 242–533 (DHRKIGQELD…LIEHFNGKFP (292 aa)) are catalytic. The Zn(2+) site is built by C334, H385, and H510.

This sequence belongs to the class-II aminoacyl-tRNA synthetase family. In terms of assembly, homodimer. Zn(2+) serves as cofactor.

The protein resides in the cytoplasm. The catalysed reaction is tRNA(Thr) + L-threonine + ATP = L-threonyl-tRNA(Thr) + AMP + diphosphate + H(+). Catalyzes the attachment of threonine to tRNA(Thr) in a two-step reaction: L-threonine is first activated by ATP to form Thr-AMP and then transferred to the acceptor end of tRNA(Thr). The sequence is that of Threonine--tRNA ligase from Haloquadratum walsbyi (strain DSM 16790 / HBSQ001).